The following is a 309-amino-acid chain: MDYMLNISTNITRKILETLWNYGCDLFLNEELADHVNFKLGGKVPLFAIPNSTNGFIETINLLNKEGIEFRIIGRGTNILPVDEPLPYVVVSTERMDDVFVDNEKIQVGAGLSFKKLCLVALENELSGFENAFGLPGSVGGAVYMNAGCYGWETAENIVEVVAFDGKDIIKLGKNEIGFGYRTSIFKSEKNLIILQATFKLKKGNKNEIYNLMLETMKKRYEKQPLEFPSAGSVFKRPRPDFYVGTAIESLGLKGFSIGGAQISEKHAGFIINKGGAKAEDVLKLIEYVKDKVREKYNVELETEIEIWK.

Residues 40–204 (LGGKVPLFAI…LQATFKLKKG (165 aa)) form the FAD-binding PCMH-type domain. The active site involves Arg182. The Proton donor role is filled by Ser233. The active site involves Glu304.

Belongs to the MurB family. FAD is required as a cofactor.

Its subcellular location is the cytoplasm. It carries out the reaction UDP-N-acetyl-alpha-D-muramate + NADP(+) = UDP-N-acetyl-3-O-(1-carboxyvinyl)-alpha-D-glucosamine + NADPH + H(+). It functions in the pathway cell wall biogenesis; peptidoglycan biosynthesis. In terms of biological role, cell wall formation. In Fervidobacterium nodosum (strain ATCC 35602 / DSM 5306 / Rt17-B1), this protein is UDP-N-acetylenolpyruvoylglucosamine reductase.